The sequence spans 697 residues: Sentrin-specific protease (697 aa).

Residues 1–14 (MSRRSDLSDKDSQS) are compositionally biased toward basic and acidic residues. 2 disordered regions span residues 1–47 (MSRR…QGLG) and 365–387 (SEES…SDSY). A Nuclear localization signal motif is present at residues 15–19 (RKRHW). The short motif at 462–467 (KVEKKK) is the Nuclear localization signal element. Positions 501–664 (IQICKKDLAT…VFSCQFGEWA (164 aa)) are protease. Residues histidine 585, aspartate 602, and cysteine 653 contribute to the active site.

The protein belongs to the peptidase C48 family.

It localises to the nucleus envelope. Protease that deconjugates smo-1 from targeted proteins and may catalyze the processing of smo-1 to its mature form. This is Sentrin-specific protease (ulp-1) from Caenorhabditis elegans.